Consider the following 500-residue polypeptide: Pyridine nucleotide-disulfide oxidoreductase domain-containing protein 1 (500 aa).

M1 is subject to N-acetylmethionine.

Belongs to the class-I pyridine nucleotide-disulfide oxidoreductase family. PYROXD1 subfamily. FAD serves as cofactor.

The protein resides in the nucleus. Its subcellular location is the cytoplasm. It localises to the myofibril. The protein localises to the sarcomere. Probable FAD-dependent oxidoreductase; involved in the cellular oxidative stress response. Required for normal sarcomere structure and muscle fiber integrity. The chain is Pyridine nucleotide-disulfide oxidoreductase domain-containing protein 1 (PYROXD1) from Pongo abelii (Sumatran orangutan).